We begin with the raw amino-acid sequence, 287 residues long: ATP synthase gamma chain (287 aa).

This sequence belongs to the ATPase gamma chain family. In terms of assembly, F-type ATPases have 2 components, CF(1) - the catalytic core - and CF(0) - the membrane proton channel. CF(1) has five subunits: alpha(3), beta(3), gamma(1), delta(1), epsilon(1). CF(0) has three main subunits: a, b and c.

Its subcellular location is the cell inner membrane. Produces ATP from ADP in the presence of a proton gradient across the membrane. The gamma chain is believed to be important in regulating ATPase activity and the flow of protons through the CF(0) complex. The sequence is that of ATP synthase gamma chain from Alkalilimnicola ehrlichii (strain ATCC BAA-1101 / DSM 17681 / MLHE-1).